Reading from the N-terminus, the 493-residue chain is Leucine-rich repeat-containing protein 14 (493 aa).

The LRR 1; degenerate repeat unit spans residues 111–146 (KHALRVLDMTGLLDDGVEQDPGTMSMWDCTAAVART). Residues 194 to 218 (RLCCRDLRAEDLPMRNTVALLQLLD) form an LRR 2; degenerate repeat. The stretch at 219–246 (AGCLRRVDLRFNNLGLRGLSVIIPHVAR) is one LRR 3; degenerate repeat. One copy of the LRR 4; degenerate repeat lies at 247–282 (FQHLASLRLHYVHGDSRQPSVDGEDNFRYFLAQMGR). 5 LRR repeats span residues 283–307 (FTCLRELSMGSSLLSGRLDQLLSTL), 308–339 (QSPLESLELAFCALLPEDLRFLARSPHAAHLK), 340–360 (KLDLSGNDLSGSQLAPFQGLL), 364–391 (AATLLHLELTECQLADTQLLATLPILTQ), and 392–416 (CASLRYLGLYGNPLSMAGLKELLRD).

This sequence belongs to the PRAME family. LRRC14 subfamily. In terms of assembly, interacts with IKBKB; disrupts IKBKB-IKBKG interaction preventing I-kappa-B-kinase (IKK) core complex formation and leading to a decrease of IKBKB phosphorylation and NF-kappaB activation. Interacts with CHUK.

The protein localises to the cytoplasm. Its function is as follows. Negatively regulates Toll-like receptor-mediated NF-kappa-B signaling by disrupting IKK core complex formation through interaction with IKBKB. This is Leucine-rich repeat-containing protein 14 from Homo sapiens (Human).